The chain runs to 416 residues: Gamma-glutamyl phosphate reductase (416 aa).

Belongs to the gamma-glutamyl phosphate reductase family.

The protein resides in the cytoplasm. The enzyme catalyses L-glutamate 5-semialdehyde + phosphate + NADP(+) = L-glutamyl 5-phosphate + NADPH + H(+). The protein operates within amino-acid biosynthesis; L-proline biosynthesis; L-glutamate 5-semialdehyde from L-glutamate: step 2/2. Functionally, catalyzes the NADPH-dependent reduction of L-glutamate 5-phosphate into L-glutamate 5-semialdehyde and phosphate. The product spontaneously undergoes cyclization to form 1-pyrroline-5-carboxylate. In Leptospira interrogans serogroup Icterohaemorrhagiae serovar Lai (strain 56601), this protein is Gamma-glutamyl phosphate reductase.